Consider the following 220-residue polypeptide: Probable glutathione S-transferase parA (220 aa).

One can recognise a GST N-terminal domain in the interval 4–83 (NNVVLLDFWP…YIDEVWHDKC (80 aa)). Glutathione-binding positions include Ser-14, Lys-41, Ile-55, and 67-68 (ES). A GST C-terminal domain is found at 89-209 (DPYERSQARF…LPHPHKIYGF (121 aa)).

Belongs to the GST superfamily. HSP26 family.

It carries out the reaction RX + glutathione = an S-substituted glutathione + a halide anion + H(+). In Nicotiana tabacum (Common tobacco), this protein is Probable glutathione S-transferase parA (PARA).